Here is a 551-residue protein sequence, read N- to C-terminus: Delta-selinene synthase TPS7FN (551 aa).

5 residues coordinate (2E,6E)-farnesyl diphosphate: Arg266, Asp303, Asp307, Arg444, and Asp447. The Mg(2+) site is built by Asp303 and Asp307. Positions 303–307 (DDIYD) match the DDXXD motif motif. Positions 447, 451, and 455 each coordinate Mg(2+).

Belongs to the terpene synthase family. Tpsb subfamily. The cofactor is Mg(2+). Mn(2+) serves as cofactor.

The enzyme catalyses (2E,6E)-farnesyl diphosphate = delta-selinene + diphosphate. It carries out the reaction (2E)-geranyl diphosphate = beta-myrcene + diphosphate. The catalysed reaction is (2E)-geranyl diphosphate = (4S)-limonene + diphosphate. It catalyses the reaction (2E,6E)-farnesyl diphosphate + H2O = selina-6-en-4-ol + diphosphate. It participates in secondary metabolite biosynthesis; terpenoid biosynthesis. In terms of biological role, involved in sesquiterpene olefins biosynthesis, constituants of cannabinoids and terpenoids-rich resins. Catalyzes mainly the conversion of (2E)-farnesyl diphosphate to delta-selinene, and also produces minor products such as selina-6-en-4-ol. Can also use (2E)-geranyl diphosphate as substrate with low efficiency, producing minor amounts of myrcene and limonene. This is Delta-selinene synthase TPS7FN from Cannabis sativa (Hemp).